The primary structure comprises 554 residues: DDB1- and CUL4-associated factor 11 homolog (554 aa).

Residues 24 to 52 are disordered; that stretch reads QRMKNRNDSDTDFSDDDEETSGGCPKMTP. Acidic residues predominate over residues 33-43; that stretch reads DTDFSDDDEET. 5 WD repeats span residues 245–284, 288–328, 336–375, 414–458, and 461–500; these read QNQC…RIRT, AHED…DGDV, GHRD…CQGG, GHSV…VSRR, and GHQA…EGVI. The disordered stretch occupies residues 527-554; it reads PQRKLRKPISARNAKCPTTSSEPDDFQI.

Belongs to the WD repeat LEC14B family.

Functionally, involved in regulation of lifespan. Required for dopaminergic CEP neuron degeneration in response to Mn(2+). This chain is DDB1- and CUL4-associated factor 11 homolog (wdr-23), found in Caenorhabditis briggsae.